The primary structure comprises 286 residues: Enoyl-CoA hydratase ChsH3 (286 aa).

A MaoC-like domain is found at A163–T271. Catalysis depends on residues D189 and H194.

It belongs to the enoyl-CoA hydratase/isomerase family. In terms of assembly, homodimer.

The catalysed reaction is (22E)-3-oxochola-4,22-dien-24-oyl-CoA + H2O = (22S)-hydroxy-3-oxo-chol-4-ene-24-oyl-CoA. Its pathway is steroid metabolism; cholesterol degradation. Its function is as follows. Degradation of the cholesterol side chain involves 3 multistep beta-oxidation cycles, this is involved in the second cycle. Hydrates bulky steroid enoyl-CoA esters, has highest activity with 3-OCDO-CoA (3-oxochol-4,22-dien-24-oyl-CoA) making (22S)-HOCO-CoA, followed by octenoyl-CoA, with weaker activity on 3-OCDS-CoA (3-oxocholest-4,24-dien-26-oyl-CoA) and none on 3-OPDC-CoA (3-oxo-pregna-4,17-diene-20- carboxyl-CoA). Hydrates the same substrate as EchA19, but the 2 enzymes make different stereoisomers of the product. The protein is Enoyl-CoA hydratase ChsH3 of Mycobacterium tuberculosis (strain ATCC 25618 / H37Rv).